The primary structure comprises 126 residues: MKLLILALTCAAAVWARPGETYSDKYDTIDVNEVLQSERLLKGYVECLLDKGRCTPDGKELKDTLPDALEHECSKCTEKQKSGADTVIRHLVNKRPELWKELAVKYDPENIYQERYKDRLESVKEH.

The N-terminal stretch at 1–18 (MKLLILALTCAAAVWARP) is a signal peptide.

It belongs to the insect A10/OS-D protein family.

The protein localises to the secreted. This Thaumetopoea pityocampa (Pine processionary moth) protein is Allergen Tha p 1.